The chain runs to 429 residues: Methylenetetrahydrofolate--tRNA-(uracil-5-)-methyltransferase TrmFO (429 aa).

7–12 (GAGLAG) serves as a coordination point for FAD.

It belongs to the MnmG family. TrmFO subfamily. FAD serves as cofactor.

The protein localises to the cytoplasm. The catalysed reaction is uridine(54) in tRNA + (6R)-5,10-methylene-5,6,7,8-tetrahydrofolate + NADH + H(+) = 5-methyluridine(54) in tRNA + (6S)-5,6,7,8-tetrahydrofolate + NAD(+). It catalyses the reaction uridine(54) in tRNA + (6R)-5,10-methylene-5,6,7,8-tetrahydrofolate + NADPH + H(+) = 5-methyluridine(54) in tRNA + (6S)-5,6,7,8-tetrahydrofolate + NADP(+). Its function is as follows. Catalyzes the folate-dependent formation of 5-methyl-uridine at position 54 (M-5-U54) in all tRNAs. In Thermosipho melanesiensis (strain DSM 12029 / CIP 104789 / BI429), this protein is Methylenetetrahydrofolate--tRNA-(uracil-5-)-methyltransferase TrmFO.